A 289-amino-acid polypeptide reads, in one-letter code: Iron-sulfur cluster carrier protein (289 aa).

The segment covering 1–18 (MAEECSGNCDSCGSSSDC) has biased composition (low complexity). The segment at 1-20 (MAEECSGNCDSCGSSSDCSD) is disordered. 48-55 (GKGGVGKS) provides a ligand contact to ATP.

Belongs to the Mrp/NBP35 ATP-binding proteins family. As to quaternary structure, homodimer.

In terms of biological role, binds and transfers iron-sulfur (Fe-S) clusters to target apoproteins. Can hydrolyze ATP. This is Iron-sulfur cluster carrier protein from Methanococcus maripaludis (strain DSM 14266 / JCM 13030 / NBRC 101832 / S2 / LL).